The chain runs to 171 residues: S-ribosylhomocysteine lyase (171 aa).

Positions 54, 58, and 128 each coordinate Fe cation.

It belongs to the LuxS family. Homodimer. Fe cation serves as cofactor.

It carries out the reaction S-(5-deoxy-D-ribos-5-yl)-L-homocysteine = (S)-4,5-dihydroxypentane-2,3-dione + L-homocysteine. Involved in the synthesis of autoinducer 2 (AI-2) which is secreted by bacteria and is used to communicate both the cell density and the metabolic potential of the environment. The regulation of gene expression in response to changes in cell density is called quorum sensing. Catalyzes the transformation of S-ribosylhomocysteine (RHC) to homocysteine (HC) and 4,5-dihydroxy-2,3-pentadione (DPD). This is S-ribosylhomocysteine lyase from Escherichia coli (strain 55989 / EAEC).